Consider the following 248-residue polypeptide: Coenzyme F420:L-glutamate ligase (248 aa).

Residues 15-18 (IPLI), 45-46 (ET), and K50 contribute to the GTP site. Residue D115 coordinates a divalent metal cation. Position 118 (N118) interacts with GTP. A divalent metal cation is bound by residues D155, S156, and Q213. GTP is bound at residue 211 to 218 (MGQSNEGI).

It belongs to the CofE family. As to quaternary structure, homodimer. Requires Mg(2+) as cofactor. The cofactor is Mn(2+). It depends on K(+) as a cofactor.

It catalyses the reaction oxidized coenzyme F420-0 + GTP + L-glutamate = oxidized coenzyme F420-1 + GDP + phosphate + H(+). It carries out the reaction oxidized coenzyme F420-1 + GTP + L-glutamate = oxidized coenzyme F420-2 + GDP + phosphate + H(+). Its pathway is cofactor biosynthesis; coenzyme F420 biosynthesis. Catalyzes the GTP-dependent successive addition of two or more gamma-linked L-glutamates to the L-lactyl phosphodiester of 7,8-didemethyl-8-hydroxy-5-deazariboflavin (F420-0) to form coenzyme F420-0-glutamyl-glutamate (F420-2) or polyglutamated F420 derivatives. This Methanococcus maripaludis (strain DSM 14266 / JCM 13030 / NBRC 101832 / S2 / LL) protein is Coenzyme F420:L-glutamate ligase.